Consider the following 185-residue polypeptide: Peptidyl-tRNA hydrolase (185 aa).

Y14 is a binding site for tRNA. Catalysis depends on H19, which acts as the Proton acceptor. 3 residues coordinate tRNA: Y65, N67, and N113.

The protein belongs to the PTH family. Monomer.

It localises to the cytoplasm. It catalyses the reaction an N-acyl-L-alpha-aminoacyl-tRNA + H2O = an N-acyl-L-amino acid + a tRNA + H(+). Functionally, hydrolyzes ribosome-free peptidyl-tRNAs (with 1 or more amino acids incorporated), which drop off the ribosome during protein synthesis, or as a result of ribosome stalling. In terms of biological role, catalyzes the release of premature peptidyl moieties from peptidyl-tRNA molecules trapped in stalled 50S ribosomal subunits, and thus maintains levels of free tRNAs and 50S ribosomes. This Rickettsia prowazekii (strain Madrid E) protein is Peptidyl-tRNA hydrolase.